Here is a 371-residue protein sequence, read N- to C-terminus: MTAQPDQTGSASGQIIISVDAMGGDAGPSVVVAGIAKSAKKNPQVGFILHGPEDTLKKLVAKRRVLDGRVVFRDCPDVVTMEDKPSQVVRNGKNTSMWSTLESVRNGEAAGAVSCGNTGALMALSMLRLRRLPGVTRPAIAILFPSGNPQGFNVLLDAGADIRADARDLLQYALMGASYARNGMNLLRPRVGLLNVGTEEHKGKAELKEAQALIAEYAERANYEFVGFVEGSDIPGKRCDVIVTDGFTGNVAIKTGEGTARMIGSLLREAFKYSPLSRLASLLAVTSLRRLSKRIDPRRVNGGVFLGLNGTVIKSHGSADDTGISAAVKLAFTLAQSGFAERLAARVASAAALTQDEAAPTGAQAEKQESR.

The protein belongs to the PlsX family. In terms of assembly, homodimer. Probably interacts with PlsY.

It is found in the cytoplasm. The enzyme catalyses a fatty acyl-[ACP] + phosphate = an acyl phosphate + holo-[ACP]. Its pathway is lipid metabolism; phospholipid metabolism. Catalyzes the reversible formation of acyl-phosphate (acyl-PO(4)) from acyl-[acyl-carrier-protein] (acyl-ACP). This enzyme utilizes acyl-ACP as fatty acyl donor, but not acyl-CoA. The chain is Phosphate acyltransferase from Ruegeria pomeroyi (strain ATCC 700808 / DSM 15171 / DSS-3) (Silicibacter pomeroyi).